The sequence spans 488 residues: UDP-N-acetylmuramate--L-alanine ligase (488 aa).

129 to 135 provides a ligand contact to ATP; sequence GTHGKTT.

This sequence belongs to the MurCDEF family.

The protein resides in the cytoplasm. The enzyme catalyses UDP-N-acetyl-alpha-D-muramate + L-alanine + ATP = UDP-N-acetyl-alpha-D-muramoyl-L-alanine + ADP + phosphate + H(+). It participates in cell wall biogenesis; peptidoglycan biosynthesis. Its function is as follows. Cell wall formation. This Chromohalobacter salexigens (strain ATCC BAA-138 / DSM 3043 / CIP 106854 / NCIMB 13768 / 1H11) protein is UDP-N-acetylmuramate--L-alanine ligase.